Here is a 156-residue protein sequence, read N- to C-terminus: Succinate dehydrogenase assembly factor 2-B, mitochondrial (156 aa).

The N-terminal 24 residues, 1–24 (MLRQFIVSTVGRRLQLPMMAQSRL), are a transit peptide targeting the mitochondrion.

Belongs to the SDHAF2 family. As to quaternary structure, interacts with the flavoprotein subunit within the SDH catalytic dimer.

The protein localises to the mitochondrion matrix. Plays an essential role in the assembly of succinate dehydrogenase (SDH), an enzyme complex (also referred to as respiratory complex II) that is a component of both the tricarboxylic acid (TCA) cycle and the mitochondrial electron transport chain, and which couples the oxidation of succinate to fumarate with the reduction of ubiquinone (coenzyme Q) to ubiquinol. Required for flavinylation (covalent attachment of FAD) of the flavoprotein subunit of the SDH catalytic dimer. The protein is Succinate dehydrogenase assembly factor 2-B, mitochondrial of Drosophila simulans (Fruit fly).